We begin with the raw amino-acid sequence, 512 residues long: Reduced folate transporter (512 aa).

An N-acetylmethionine modification is found at M1. At 1 to 29 the chain is on the cytoplasmic side; sequence MVPTGQVAEKQACEEPRQDRELKSWRWLV. A helical transmembrane segment spans residues 30-50; that stretch reads FYLCFFGFMAQLRPGESFITP. Folate contacts are provided by I48 and T49. Residues 51-62 are Extracellular-facing; sequence YLLERNFTKEQV. N56 carries N-linked (GlcNAc...) asparagine glycosylation. A helical transmembrane segment spans residues 63 to 85; that stretch reads TNEIIPMLPYSHLAVLVPIFLLT. Over 86–89 the chain is Cytoplasmic; sequence DYLR. A helical transmembrane segment spans residues 90–110; the sequence is YKPVLVLQCLSFVCVWLLLLL. At 111–114 the chain is on the extracellular side; that stretch reads GTSV. A helical transmembrane segment spans residues 115–137; sequence VHMQLMEVFYSITMAARIAYSSY. Positions 121 and 131 each coordinate folate. Over 138 to 151 the chain is Cytoplasmic; sequence IFSLVQPSRYQRMA. The helical transmembrane segment at 152–176 threads the bilayer; sequence SYSRAAVLLGVFISSVLGQVLVTLG. Folate is bound at residue V162. Residues 177–181 lie on the Extracellular side of the membrane; it reads GISTY. The helical transmembrane segment at 182–200 threads the bilayer; the sequence is MLNCISLGFILFSLSLSLF. The Cytoplasmic portion of the chain corresponds to 201–266; it reads LKRPKRSLFF…ELVKNVRQPQ (66 aa). Residues 267-292 traverse the membrane as a helical segment; the sequence is LRLWCLWWVFNSAGYYLITYYVHVLW. Folate is bound by residues Y281, Y282, and Y286. The Extracellular portion of the chain corresponds to 293 to 300; the sequence is KITDSRLN. Residues 301–323 form a helical membrane-spanning segment; that stretch reads YNGAVDAASTLLSAITAFTAGFV. The Cytoplasmic segment spans residues 324–329; sequence NIRWAL. Residues 330 to 350 traverse the membrane as a helical segment; sequence WSKLVIASVIAIQAGLVFCMF. Over 351–353 the chain is Extracellular; the sequence is QIP. A helical transmembrane segment spans residues 354 to 377; that stretch reads DIWVCYVTFVLFRGAYQFLVPIAT. R366 and Q370 together coordinate folate. The Cytoplasmic portion of the chain corresponds to 378-391; sequence FQIASSLSKELCAL. The helical transmembrane segment at 392 to 415 threads the bilayer; the sequence is VFGINTFLATALKTSITLVVSDKR. The required for substrate-binding stretch occupies residues 400 to 412; it reads ATALKTSITLVVS. Residues 416-423 lie on the Extracellular side of the membrane; it reads GLGLQVHQ. Residues 424–448 form a helical membrane-spanning segment; the sequence is QFRIYFMYFLTLSIICLAWAGLDGL. Topologically, residues 449–512 are cytoplasmic; it reads RYYRRGRHQP…RADLRVEAKA (64 aa). 3 positions are modified to phosphoserine: S466, S471, and S476. Residues 479-512 are disordered; that stretch reads DGDLRRPQPSAPQLLPEDGSVEDGRADLRVEAKA. Basic and acidic residues predominate over residues 500-512; it reads EDGRADLRVEAKA.

The protein belongs to the reduced folate carrier (RFC) transporter (TC 2.A.48) family. In terms of tissue distribution, expressed in liver, heart, brain, spleen, lung and skeletal muscle.

The protein localises to the cell membrane. It localises to the apical cell membrane. The protein resides in the basolateral cell membrane. The catalysed reaction is 5-amino-1-(5-phospho-beta-D-ribosyl)imidazole-4-carboxamide(in) + (6S)-5-methyl-5,6,7,8-tetrahydrofolate(out) = 5-amino-1-(5-phospho-beta-D-ribosyl)imidazole-4-carboxamide(out) + (6S)-5-methyl-5,6,7,8-tetrahydrofolate(in). Its function is as follows. Antiporter that mediates the import of reduced folates, driven by the export of organic anions. Also acts as an importer of immunoreactive cyclic dinucleotides, but with a lower transporter activity. Mechanistically, acts as a secondary active transporter, which exports intracellular organic anions down their concentration gradients to facilitate the uptake of its substrates. Has high affinity for N5-methyltetrahydrofolate, the predominant circulating form of folate. Also mediates the import of antifolate drug methotrexate. 5-amino-4-imidazolecarboxamide riboside (AICAR), when phosphorylated to AICAR monophosphate, can serve as an organic anion for antiporter activity. This chain is Reduced folate transporter, found in Rattus norvegicus (Rat).